The primary structure comprises 1076 residues: Ribosome quality control complex subunit NEMF (1076 aa).

T7 carries the post-translational modification Phosphothreonine. Positions 296–359 (VDEFYSKIEG…LIEMNLQIVD (64 aa)) form a coiled coil. Position 417 is a phosphoserine (S417). Positions 420 to 453 (EDDDVDGDVNVEKNETEPPKGKKKKQKNKQLQKP) are disordered. The segment covering 429-439 (NVEKNETEPPK) has biased composition (basic and acidic residues). Positions 440–449 (GKKKKQKNKQ) are enriched in basic residues. A coiled-coil region spans residues 483–514 (AAKKTQKTVEAAEKAFKSAEKKTKQTLKEVQT). 2 stretches are compositionally biased toward acidic residues: residues 691 to 710 (ISEE…EDKE) and 742 to 754 (LIQE…EGEY). Disordered stretches follow at residues 691–715 (ISEE…HETP) and 742–972 (LIQE…DLDQ). S747, S748, and S763 each carry phosphoserine. The segment covering 755-768 (EEVRKDQDSVGEMK) has biased composition (basic and acidic residues). Residues 777–795 (YPDTTIDLSHLQPQRSIQK) show a composition bias toward polar residues. S831 carries the post-translational modification Phosphoserine. A compositionally biased stretch (basic and acidic residues) spans 839–854 (LEGKDKEKESTVHIET). Residues 869 to 894 (KRGQKSKMKKMKEKYKDQDEEDRELI) are a coiled coil. Basic residues predominate over residues 870-881 (RGQKSKMKKMKE). The span at 937–965 (DNIKKETPFLEVITHELQDFAVDDPHDDK) shows a compositional bias: basic and acidic residues.

It belongs to the NEMF family. Component of the ribosome quality control complex (RQC), composed of the E3 ubiquitin ligase LTN1, TCF25 and NEMF associated with the 60S ribosomal subunit. The complex probably also contains VCP/p97 and its ubiquitin-binding cofactors. Interacts (via its N-terminus) with XPO1. Expressed in brain, heart, liver, lung, spleen, and skeletal muscle. Also expressed at lower levels in stomach and testis.

It is found in the cytoplasm. Its subcellular location is the cytosol. The protein resides in the nucleus. Functionally, key component of the ribosome quality control complex (RQC), a ribosome-associated complex that mediates the extraction of incompletely synthesized nascent chains from stalled ribosomes as well as their ubiquitin-mediated proteasomal degradation. Thereby, frees 60S subunit ribosomes from the stalled translation complex and prevents the accumulation of nascent polypeptide chains that are potentially toxic for the cell. Within the RQC complex, NEMF specifically binds stalled 60S ribosomal subunits by recognizing an exposed, nascent chain-conjugated tRNA moiety and promotes the recruitment of LTN1 to stalled 60S subunits. Following binding to stalled 60S ribosomal subunits, NEMF mediates CAT tailing by recruiting alanine-charged tRNA to the A-site and directing the elongation of stalled nascent chains independently of mRNA or 40S subunits, leading to non-templated C-terminal alanine extensions (CAT tails). Mainly recruits alanine-charged tRNAs, but can also other amino acid-charged tRNAs. CAT tailing is required to promote ubiquitination of stalled nascent chains by different E3 ubiquitin-protein ligases. In the canonical RQC pathway (RQC-L), CAT tailing facilitates LTN1-dependent ubiquitination by exposing lysine residues that would otherwise remain buried in the ribosomal exit tunnel. In the alternative RQC pathway (RQC-C) CAT tailing creates an C-degron mainly composed of alanine that is recognized by the CRL2(KLHDC10) and RCHY1/PIRH2 E3 ligases, leading to ubiquitination and degradation of stalled nascent chains. NEMF may also indirectly play a role in nuclear export. This chain is Ribosome quality control complex subunit NEMF, found in Homo sapiens (Human).